The primary structure comprises 132 residues: Small ribosomal subunit protein uS8 (132 aa).

It belongs to the universal ribosomal protein uS8 family. Part of the 30S ribosomal subunit. Contacts proteins S5 and S12.

In terms of biological role, one of the primary rRNA binding proteins, it binds directly to 16S rRNA central domain where it helps coordinate assembly of the platform of the 30S subunit. This is Small ribosomal subunit protein uS8 from Paenarthrobacter aurescens (strain TC1).